We begin with the raw amino-acid sequence, 600 residues long: Elongation factor 4 (600 aa).

Residues 5–187 (SRIRNFSIIA…AIVTRLPPPK (183 aa)) enclose the tr-type G domain. GTP is bound by residues 17-22 (DHGKST) and 134-137 (NKID).

It belongs to the TRAFAC class translation factor GTPase superfamily. Classic translation factor GTPase family. LepA subfamily.

It localises to the cell inner membrane. It catalyses the reaction GTP + H2O = GDP + phosphate + H(+). Required for accurate and efficient protein synthesis under certain stress conditions. May act as a fidelity factor of the translation reaction, by catalyzing a one-codon backward translocation of tRNAs on improperly translocated ribosomes. Back-translocation proceeds from a post-translocation (POST) complex to a pre-translocation (PRE) complex, thus giving elongation factor G a second chance to translocate the tRNAs correctly. Binds to ribosomes in a GTP-dependent manner. This chain is Elongation factor 4, found in Rhodospirillum centenum (strain ATCC 51521 / SW).